We begin with the raw amino-acid sequence, 273 residues long: Outer surface protein A (273 aa).

The first 16 residues, 1–16, serve as a signal peptide directing secretion; sequence MKKYLLGIGLILALIA. A lipid anchor (N-palmitoyl cysteine) is attached at Cys-17. Cys-17 carries the S-diacylglycerol cysteine lipid modification.

The protein belongs to the OspA lipoprotein family.

It localises to the cell outer membrane. Its subcellular location is the cell surface. This Borreliella burgdorferi (Lyme disease spirochete) protein is Outer surface protein A.